A 346-amino-acid chain; its full sequence is Protein RecA (346 aa).

Position 66–73 (66–73 (GPESSGKT)) interacts with ATP.

Belongs to the RecA family.

It localises to the cytoplasm. Its function is as follows. Can catalyze the hydrolysis of ATP in the presence of single-stranded DNA, the ATP-dependent uptake of single-stranded DNA by duplex DNA, and the ATP-dependent hybridization of homologous single-stranded DNAs. It interacts with LexA causing its activation and leading to its autocatalytic cleavage. In Aromatoleum aromaticum (strain DSM 19018 / LMG 30748 / EbN1) (Azoarcus sp. (strain EbN1)), this protein is Protein RecA.